The primary structure comprises 373 residues: MATSASSHLNKGIKQVYMSLPQGEKVQAMYIWIDGTGEGLRCKTRTLDSEPKCIEELPEWNFDGSSTFQSEGSNSDMYLVPAAMFRDPFRKDPNKLVFCEVFKYNRKPAETNLRHTCKRIMDMVSNQHPWFGMEQEYTLMGTDGHPFGWPSNGFPGPQGPYYCGVGADKAYGRDIVEAHYRACLYAGIKIGGTNAEVMPAQWEFQIGPCEGIDMGDHLWVARFILHRVCEDFGVIATFDPKPIPGNWNGAGCHTNFSTKAMREENGLKYIEEAIEKLSKRHQYHIRAYDPKGGLDNTRRLTGFHETSNINDFSAGVANRGASIRIPRTGGQEKKGYFEDRRPSANCDPFAVTEALIRTCLLNETGDEPFQYKN.

An N-acetylalanine modification is found at alanine 2. The required for glutamine-induced ubiquitination by CRL4(CRBN) and proteasomal degradation stretch occupies residues 2-25 (ATSASSHLNKGIKQVYMSLPQGEK). Residues lysine 11 and lysine 14 each carry the N6-acetyllysine modification. In terms of domain architecture, GS beta-grasp spans 24-106 (EKVQAMYIWI…VFCEVFKYNR (83 aa)). Tyrosine 104 carries the post-translational modification Phosphotyrosine. The GS catalytic domain occupies 113-373 (LRHTCKRIMD…TGDEPFQYKN (261 aa)). Residue glutamate 134 participates in ATP binding. Residues glutamate 134, glutamate 136, glutamate 196, and glutamate 203 each coordinate Mn(2+). 203-208 (EFQIGP) provides a ligand contact to ATP. L-glutamate is bound at residue 246 to 247 (NW). Histidine 253 provides a ligand contact to Mn(2+). ATP is bound by residues 255–257 (NFS), arginine 319, and arginine 324. L-glutamate is bound at residue arginine 319. Residue 336–338 (YFE) coordinates ADP. Glutamate 338 is a Mn(2+) binding site. Arginine 340 is an L-glutamate binding site. Serine 343 is modified (phosphoserine).

It belongs to the glutamine synthetase family. As to quaternary structure, decamer; composed of two pentamers. Interacts with PALMD. Interacts with RHOJ. Interacts with BEST2; this interaction tethers a fraction of GLUL to the membrane, causing a decrease of cytosolic glutamine synthase (GS) activity and inhibits the chloride channel activity of BEST2 by affecting the gating at the aperture in the absence of intracellular glutamate. Mg(2+) is required as a cofactor. Requires Mn(2+) as cofactor. Post-translationally, palmitoylated; undergoes autopalmitoylation. Acetylated by EP300/p300; acetylation is stimulated by increased glutamine levels and promotes ubiquitin-mediated proteasomal degradation. In terms of processing, ubiquitinated by ZNRF1. Ubiquitinated by the DCX (DDB1-CUL4-X-box) E3 ubiquitin-protein ligase complex called CRL4(CRBN), leading to proteasomal degradation.

The protein localises to the cytoplasm. It is found in the cytosol. It localises to the microsome. The protein resides in the mitochondrion. Its subcellular location is the cell membrane. It catalyses the reaction L-glutamate + NH4(+) + ATP = L-glutamine + ADP + phosphate + H(+). The enzyme catalyses L-cysteinyl-[protein] + hexadecanoyl-CoA = S-hexadecanoyl-L-cysteinyl-[protein] + CoA. Its activity is regulated as follows. Glutamine synthetase activity is inhibited by methionine sulfoximine (MSO). Its function is as follows. Glutamine synthetase that catalyzes the ATP-dependent conversion of glutamate and ammonia to glutamine. Its role depends on tissue localization: in the brain, it regulates the levels of toxic ammonia and converts neurotoxic glutamate to harmless glutamine, whereas in the liver, it is one of the enzymes responsible for the removal of ammonia. Plays a key role in ammonium detoxification during erythropoiesis: the glutamine synthetase activity is required to remove ammonium generated by porphobilinogen deaminase (HMBS) during heme biosynthesis to prevent ammonium accumulation and oxidative stress. Essential for proliferation of fetal skin fibroblasts. Independently of its glutamine synthetase activity, required for endothelial cell migration during vascular development. Involved in angiogenesis by regulating membrane localization and activation of the GTPase RHOJ, possibly by promoting RHOJ palmitoylation. May act as a palmitoyltransferase for RHOJ: able to autopalmitoylate and then transfer the palmitoyl group to RHOJ. Plays a role in ribosomal 40S subunit biogenesis. Through the interaction with BEST2, inhibits BEST2 channel activity by affecting the gating at the aperture in the absence of intracellular L-glutamate, but sensitizes BEST2 to intracellular L-glutamate, which promotes the opening of BEST2 and thus relieves its inhibitory effect on BEST2. The chain is Glutamine synthetase from Sus scrofa (Pig).